A 457-amino-acid chain; its full sequence is Bifunctional protein GlmU (457 aa).

A pyrophosphorylase region spans residues 1–228 (MEGLVTLILA…SEEITGVNSR (228 aa)). UDP-N-acetyl-alpha-D-glucosamine-binding positions include 9–12 (LAAG), lysine 23, glutamine 73, and 78–79 (GT). Aspartate 102 is a Mg(2+) binding site. The UDP-N-acetyl-alpha-D-glucosamine site is built by glycine 139, glutamate 154, asparagine 169, and asparagine 226. Asparagine 226 contacts Mg(2+). The segment at 229-249 (VQLFEAEKIMRKRINYRHMEN) is linker. The N-acetyltransferase stretch occupies residues 250-457 (GVTIVDPDTT…VQERIKKGRL (208 aa)). Residues arginine 331 and lysine 349 each contribute to the UDP-N-acetyl-alpha-D-glucosamine site. The active-site Proton acceptor is the histidine 361. Residues tyrosine 364 and asparagine 375 each coordinate UDP-N-acetyl-alpha-D-glucosamine. Acetyl-CoA-binding positions include 384-385 (NY), alanine 421, and arginine 438.

The protein in the N-terminal section; belongs to the N-acetylglucosamine-1-phosphate uridyltransferase family. This sequence in the C-terminal section; belongs to the transferase hexapeptide repeat family. As to quaternary structure, homotrimer. It depends on Mg(2+) as a cofactor.

It is found in the cytoplasm. The enzyme catalyses alpha-D-glucosamine 1-phosphate + acetyl-CoA = N-acetyl-alpha-D-glucosamine 1-phosphate + CoA + H(+). It carries out the reaction N-acetyl-alpha-D-glucosamine 1-phosphate + UTP + H(+) = UDP-N-acetyl-alpha-D-glucosamine + diphosphate. The protein operates within nucleotide-sugar biosynthesis; UDP-N-acetyl-alpha-D-glucosamine biosynthesis; N-acetyl-alpha-D-glucosamine 1-phosphate from alpha-D-glucosamine 6-phosphate (route II): step 2/2. Its pathway is nucleotide-sugar biosynthesis; UDP-N-acetyl-alpha-D-glucosamine biosynthesis; UDP-N-acetyl-alpha-D-glucosamine from N-acetyl-alpha-D-glucosamine 1-phosphate: step 1/1. It participates in bacterial outer membrane biogenesis; LPS lipid A biosynthesis. In terms of biological role, catalyzes the last two sequential reactions in the de novo biosynthetic pathway for UDP-N-acetylglucosamine (UDP-GlcNAc). The C-terminal domain catalyzes the transfer of acetyl group from acetyl coenzyme A to glucosamine-1-phosphate (GlcN-1-P) to produce N-acetylglucosamine-1-phosphate (GlcNAc-1-P), which is converted into UDP-GlcNAc by the transfer of uridine 5-monophosphate (from uridine 5-triphosphate), a reaction catalyzed by the N-terminal domain. In Thermoanaerobacter pseudethanolicus (strain ATCC 33223 / 39E) (Clostridium thermohydrosulfuricum), this protein is Bifunctional protein GlmU.